The sequence spans 95 residues: Aspartyl/glutamyl-tRNA(Asn/Gln) amidotransferase subunit C (95 aa).

Belongs to the GatC family. In terms of assembly, heterotrimer of A, B and C subunits.

It catalyses the reaction L-glutamyl-tRNA(Gln) + L-glutamine + ATP + H2O = L-glutaminyl-tRNA(Gln) + L-glutamate + ADP + phosphate + H(+). The catalysed reaction is L-aspartyl-tRNA(Asn) + L-glutamine + ATP + H2O = L-asparaginyl-tRNA(Asn) + L-glutamate + ADP + phosphate + 2 H(+). Functionally, allows the formation of correctly charged Asn-tRNA(Asn) or Gln-tRNA(Gln) through the transamidation of misacylated Asp-tRNA(Asn) or Glu-tRNA(Gln) in organisms which lack either or both of asparaginyl-tRNA or glutaminyl-tRNA synthetases. The reaction takes place in the presence of glutamine and ATP through an activated phospho-Asp-tRNA(Asn) or phospho-Glu-tRNA(Gln). The protein is Aspartyl/glutamyl-tRNA(Asn/Gln) amidotransferase subunit C of Pseudomonas fluorescens (strain ATCC BAA-477 / NRRL B-23932 / Pf-5).